Consider the following 205-residue polypeptide: Mitotic spindle assembly checkpoint protein MAD2A (205 aa).

Position 2 is an N-acetylalanine (alanine 2). 6 positions are modified to phosphoserine: serine 6, serine 130, serine 170, serine 178, serine 185, and serine 195. Residues 14–197 form the HORMA domain; that stretch reads RGSAEIVAEF…TTIHKVNSMV (184 aa). Residues 195-205 are required for assuming the closed conformation and for interaction with CDC20; sequence SMVAYKIPVND.

The protein belongs to the MAD2 family. Monomer and homodimer. Heterodimerizes with MAD2L1 in order to form a tetrameric MAD1L1-MAD2L1 core complex. In the closed and open conformation, interacts with MAD1L1. Formation of a heterotetrameric core complex containing two molecules each of MAD1L1 and of MAD2L1 promotes binding of another molecule of MAD2L1 to each MAD2L1, resulting in a heterohexamer. Interacts with MAD2L1BP. Interacts with ADAM17/TACE. Interacts with CDC20. Dimeric MAD2L1 in the closed conformation interacts with CDC20. Monomeric MAD2L1 in the open conformation does not interact with CDC20. CDC20 competes with MAD1L1 for MAD2L1 binding. In the closed conformation, interacts with BUB1B. Interacts with TTK. Interacts with TPR. Binds to UBD (via ubiquitin-like 1 domain) during mitosis. Interacts with isoform 1 and isoform 2 of NEK2. Interacts with HSF1; this interaction occurs in mitosis. Interacts with isoform 3 of MAD1L1; this interaction leads to the cytoplasmic sequestration of MAD2L1. Post-translationally, phosphorylated on multiple serine residues. The level of phosphorylation varies during the cell cycle and is highest during mitosis. Phosphorylation abolishes interaction with MAD1L1 and reduces interaction with CDC20. Phosphorylated by NEK2.

Its subcellular location is the nucleus. The protein resides in the chromosome. The protein localises to the centromere. It is found in the kinetochore. It localises to the cytoplasm. Its subcellular location is the cytoskeleton. The protein resides in the spindle pole. In terms of biological role, component of the spindle-assembly checkpoint that prevents the onset of anaphase until all chromosomes are properly aligned at the metaphase plate. In the closed conformation (C-MAD2) forms a heterotetrameric complex with MAD1L1 at unattached kinetochores during prometaphase, the complex recruits open conformation molecules of MAD2L1 (O-MAD2) and then promotes the conversion of O-MAD2 to C-MAD2. Required for the execution of the mitotic checkpoint which monitors the process of kinetochore-spindle attachment and inhibits the activity of the anaphase promoting complex by sequestering CDC20 until all chromosomes are aligned at the metaphase plate. This is Mitotic spindle assembly checkpoint protein MAD2A (MAD2L1) from Homo sapiens (Human).